The primary structure comprises 434 residues: ATP phosphoribosyltransferase regulatory subunit (434 aa).

It belongs to the class-II aminoacyl-tRNA synthetase family. HisZ subfamily. In terms of assembly, heteromultimer composed of HisG and HisZ subunits.

It localises to the cytoplasm. It participates in amino-acid biosynthesis; L-histidine biosynthesis; L-histidine from 5-phospho-alpha-D-ribose 1-diphosphate: step 1/9. In terms of biological role, required for the first step of histidine biosynthesis. May allow the feedback regulation of ATP phosphoribosyltransferase activity by histidine. This Geobacter metallireducens (strain ATCC 53774 / DSM 7210 / GS-15) protein is ATP phosphoribosyltransferase regulatory subunit.